Consider the following 242-residue polypeptide: Uridylate kinase (242 aa).

11-14 (KLSG) contacts ATP. The tract at residues 19 to 24 (GDKGVG) is involved in allosteric activation by GTP. G53 provides a ligand contact to UMP. ATP is bound by residues G54 and R58. Residues D73 and 134–141 (IGSPYFST) each bind UMP. ATP is bound by residues N162, Y168, and D171.

The protein belongs to the UMP kinase family. Homohexamer.

The protein localises to the cytoplasm. It carries out the reaction UMP + ATP = UDP + ADP. The protein operates within pyrimidine metabolism; CTP biosynthesis via de novo pathway; UDP from UMP (UMPK route): step 1/1. With respect to regulation, allosterically activated by GTP. Inhibited by UTP. Functionally, catalyzes the reversible phosphorylation of UMP to UDP. The polypeptide is Uridylate kinase (Streptococcus agalactiae serotype III (strain NEM316)).